We begin with the raw amino-acid sequence, 192 residues long: Protein FAM169BP (192 aa).

The tract at residues 121 to 192 is disordered; sequence YQAHPGNSED…PPGKLTRSSP (72 aa). Residues 159-177 show a composition bias toward acidic residues; that stretch reads EELEDTKDDPECGVEEEDA.

It belongs to the FAM169 family.

This chain is Protein FAM169BP, found in Homo sapiens (Human).